A 971-amino-acid chain; its full sequence is MIFIMTDAHAQSAQNIATTYDPTDIERKWYQIWEEKGYFKPSGQGDSFCIMIPPPNVTGSLHMGHGFNNAIMDALTRYNRMMGKNTLWQPGTDHAGIATQMVVERQLAAQNISRHDLGREQFIDKVWEWKEQSGGTITKQIRRLGSSVDWSRERFTMDDGLSNAVKEVFVKLHEDGLIYRGKRLVNWDPKLQTALSDLEVESVEEKGSLWHFKYFFEDKSLKTQDGHDFLVVATTRPETLLGDTAVAVHPEDERYAHLIGKNIVLPITGRLVPIVADEYVEKDFGTGCVKITPAHDFNDYDLGKRHDLPIINIFNKNAEVLAEFEYIAKAGEQISDAIAAPADYVGLERFAARKKLVAQAEAEGWLDQIQPYDLKAPRGDRSGVIVEPLLTDQWYVKIAPLAQPAIEAVQDGRIKFVPEQYTNMYMAWMNNIQDWCISRQLWWGHRIPAWYDAEGNVYVGRNEEEVRAKNNLAADLALQQDEDVLDTWFSSGLWTFSTLGWTGDAKKDAENYFLNTFHPTDVLVTGFDIIFFWVARMIMMTMHFMKNEDGTPQVPFKTVYVHGLVRDGEGQKMSKSKGNVLDPLDLIDGIDLESLVQKRTFGLMNPKQAEKIEKATRKEFPEGINSYGTDAVRFTFCALANTGRDIKFDLKRVEGYRNFCNKIWNATRFVLMNVEGQTVAQEARPELWELPEQWIMSRLQKAEQAVHQAFATYRLDLAAQTIYDFIWNEYCDWYVELTKPVLNDAEVSEERKAEVRRVLLAVMEASLRLAHPLMPYLTEEIWQTLAPMIGKGGDTIMTAKYPVPEAAKMNEQAEADMQWLQGLIGAVRNIRGEMGLGNARLLPVLLQNISDSERTQIERIQPLFKALAKVESITFLAQGEEPPLSSSSVVGHASVFVPMKGLIDPKAELGRLQKDLDKVQKQHDQIASKLANEGFVAKAPAAVVEGEKVKLAEFADQLVKIKQSMEQIAAL.

The 'HIGH' region signature appears at 55-65 (PNVTGSLHMGH). The 'KMSKS' region motif lies at 572 to 576 (KMSKS). K575 is a binding site for ATP. Residues 906–933 (KAELGRLQKDLDKVQKQHDQIASKLANE) adopt a coiled-coil conformation.

The protein belongs to the class-I aminoacyl-tRNA synthetase family. ValS type 1 subfamily. In terms of assembly, monomer.

The protein resides in the cytoplasm. The catalysed reaction is tRNA(Val) + L-valine + ATP = L-valyl-tRNA(Val) + AMP + diphosphate. Its function is as follows. Catalyzes the attachment of valine to tRNA(Val). As ValRS can inadvertently accommodate and process structurally similar amino acids such as threonine, to avoid such errors, it has a 'posttransfer' editing activity that hydrolyzes mischarged Thr-tRNA(Val) in a tRNA-dependent manner. The polypeptide is Valine--tRNA ligase (Acinetobacter baylyi (strain ATCC 33305 / BD413 / ADP1)).